Consider the following 597-residue polypeptide: Ribosomal oxygenase 1 (597 aa).

Methionine 1 carries the post-translational modification N-acetylmethionine. A disordered region spans residues 1-138 (MDELPNGNGA…HVDDPERPWD (138 aa)). Composition is skewed to basic residues over residues 14–24 (KRGRGRRRRQP) and 37–48 (RPRKVRRHRKSA). A compositionally biased stretch (low complexity) spans 49–62 (ASRVAALRARALLS). 2 positions are modified to phosphoserine: serine 62 and serine 65. Over residues 72–81 (VRGKRERPAE) the composition is skewed to basic and acidic residues. Serine 86 carries the phosphoserine modification. The 146-residue stretch at 250 to 395 (CSLRLLCPQA…DFLEAVLPLA (146 aa)) folds into the JmjC domain. Fe cation contacts are provided by histidine 296, aspartate 298, and histidine 361.

This sequence belongs to the ROX family. NO66 subfamily. As to quaternary structure, interacts with SP7/OSX; the interaction is direct. Interacts with MYC. Interacts with PHF19; leading to its recruitment to H3K36me3 sites. It depends on Fe(2+) as a cofactor.

It localises to the nucleus. The protein localises to the nucleolus. The protein resides in the nucleoplasm. It catalyses the reaction N(6),N(6)-dimethyl-L-lysyl(36)-[histone H3] + 2 2-oxoglutarate + 2 O2 = L-lysyl(36)-[histone H3] + 2 formaldehyde + 2 succinate + 2 CO2. The enzyme catalyses N(6)-methyl-L-lysyl-[protein] + 2-oxoglutarate + O2 = L-lysyl-[protein] + formaldehyde + succinate + CO2. It carries out the reaction L-histidyl-[protein] + 2-oxoglutarate + O2 = (3S)-3-hydroxy-L-histidyl-[protein] + succinate + CO2. Oxygenase that can act as both a histone lysine demethylase and a ribosomal histidine hydroxylase. Specifically demethylates 'Lys-4' (H3K4me) and 'Lys-36' (H3K36me) of histone H3, thereby playing a central role in histone code. Preferentially demethylates trimethylated H3 'Lys-4' (H3K4me3) and monomethylated H3 'Lys-4' (H3K4me1) residues, while it has weaker activity for dimethylated H3 'Lys-36' (H3K36me2). Acts as a regulator of osteoblast differentiation via its interaction with SP7/OSX by demethylating H3K4me and H3K36me, thereby inhibiting SP7/OSX-mediated promoter activation. Also catalyzes demethylation of non-histone proteins, such as CGAS: demethylation of monomethylated CGAS promotes interaction between CGAS and PARP1, followed by PARP1 inactivation. Also catalyzes the hydroxylation of 60S ribosomal protein L8 on 'His-216', thereby playing a role in ribosome biogenesis. Participates in MYC-induced transcriptional activation. This chain is Ribosomal oxygenase 1, found in Rattus norvegicus (Rat).